A 628-amino-acid chain; its full sequence is MTWSQDLAHKTYSILHWADGYFEVNDAGQMVVMPVGRDGVRISLPEVVDAARAAGAKLPLLLRFPDILGHRLGKLQAAFAQAQSEWEYAGGYTAVYPIKVNQHRGVAGVLASHQGDGFGLEAGSKPELMAVLALSRPGGLIVCNGYKDREYIRLALIGRKLGLKTFIVIEKPSELRMVLEEAKTLGVLPGLGVRVRLASLGAGKWQNSGGDKAKFGLSPRQVLDVWKVLRGTEYADCLNVMHFHMGSQISNVRDIAKGMREATRYFVELSRLGAKITHVDVGGGLGIDYEGTRSRSDCSINYGLQAYASHIVQPLASACEDYDLVPPRIVTECGRAMTAHHAVLIANVTEVEAVPEGRVPGVCDDEPAVVRHMREIYGELDARPAIELFYEAQHFHAEGLAAYTLGQIDLVHRARIDDLFYAISHGVRERLSHEEKSHRPVLDELNERLVDKYFVNFSVFESIPDVWAINQIFPIVPIERLNEAPTRRGVVCDLTCDSDGTVKQYVENESLDSALPLHVLRHGEAYRIGFFLVGAYQEILGDIHNLFGDTDAVEVAVDGRGYRIAQQRCGDTTDVMLDYVGYALDEVRRVYAQRITAAGMSAAESKALSDMLEAGLTGYPYLSDVPLE.

Position 99 is an N6-(pyridoxal phosphate)lysine (Lys99). 279–289 contacts substrate; the sequence is VDVGGGLGIDY.

It belongs to the Orn/Lys/Arg decarboxylase class-II family. SpeA subfamily. It depends on Mg(2+) as a cofactor. Pyridoxal 5'-phosphate is required as a cofactor.

The enzyme catalyses L-arginine + H(+) = agmatine + CO2. Functionally, catalyzes the biosynthesis of agmatine from arginine. The protein is Biosynthetic arginine decarboxylase of Xylella fastidiosa (strain 9a5c).